The chain runs to 100 residues: Integration host factor subunit alpha (100 aa).

It belongs to the bacterial histone-like protein family. As to quaternary structure, heterodimer of an alpha and a beta chain.

In terms of biological role, this protein is one of the two subunits of integration host factor, a specific DNA-binding protein that functions in genetic recombination as well as in transcriptional and translational control. This is Integration host factor subunit alpha from Phenylobacterium zucineum (strain HLK1).